Reading from the N-terminus, the 1649-residue chain is DNA-directed RNA polymerase subunit beta' (1649 aa).

Cys-63, Cys-65, Cys-78, and Cys-81 together coordinate Zn(2+). Mg(2+) contacts are provided by Asp-747, Asp-749, and Asp-751. 4 residues coordinate Zn(2+): Cys-1078, Cys-1269, Cys-1276, and Cys-1279.

Belongs to the RNA polymerase beta' chain family. As to quaternary structure, the RNAP catalytic core consists of 2 alpha, 1 beta, 1 beta' and 1 omega subunit. When a sigma factor is associated with the core the holoenzyme is formed, which can initiate transcription. The cofactor is Mg(2+). Zn(2+) is required as a cofactor.

It catalyses the reaction RNA(n) + a ribonucleoside 5'-triphosphate = RNA(n+1) + diphosphate. DNA-dependent RNA polymerase catalyzes the transcription of DNA into RNA using the four ribonucleoside triphosphates as substrates. In Thermosipho melanesiensis (strain DSM 12029 / CIP 104789 / BI429), this protein is DNA-directed RNA polymerase subunit beta'.